Here is a 488-residue protein sequence, read N- to C-terminus: Aspartyl/glutamyl-tRNA(Asn/Gln) amidotransferase subunit B (488 aa).

Belongs to the GatB/GatE family. GatB subfamily. In terms of assembly, heterotrimer of A, B and C subunits.

The enzyme catalyses L-glutamyl-tRNA(Gln) + L-glutamine + ATP + H2O = L-glutaminyl-tRNA(Gln) + L-glutamate + ADP + phosphate + H(+). The catalysed reaction is L-aspartyl-tRNA(Asn) + L-glutamine + ATP + H2O = L-asparaginyl-tRNA(Asn) + L-glutamate + ADP + phosphate + 2 H(+). Functionally, allows the formation of correctly charged Asn-tRNA(Asn) or Gln-tRNA(Gln) through the transamidation of misacylated Asp-tRNA(Asn) or Glu-tRNA(Gln) in organisms which lack either or both of asparaginyl-tRNA or glutaminyl-tRNA synthetases. The reaction takes place in the presence of glutamine and ATP through an activated phospho-Asp-tRNA(Asn) or phospho-Glu-tRNA(Gln). This is Aspartyl/glutamyl-tRNA(Asn/Gln) amidotransferase subunit B from Ralstonia pickettii (strain 12J).